Here is a 214-residue protein sequence, read N- to C-terminus: Leucyl/phenylalanyl-tRNA--protein transferase (214 aa).

It belongs to the L/F-transferase family.

Its subcellular location is the cytoplasm. The enzyme catalyses N-terminal L-lysyl-[protein] + L-leucyl-tRNA(Leu) = N-terminal L-leucyl-L-lysyl-[protein] + tRNA(Leu) + H(+). The catalysed reaction is N-terminal L-arginyl-[protein] + L-leucyl-tRNA(Leu) = N-terminal L-leucyl-L-arginyl-[protein] + tRNA(Leu) + H(+). It catalyses the reaction L-phenylalanyl-tRNA(Phe) + an N-terminal L-alpha-aminoacyl-[protein] = an N-terminal L-phenylalanyl-L-alpha-aminoacyl-[protein] + tRNA(Phe). Functionally, functions in the N-end rule pathway of protein degradation where it conjugates Leu, Phe and, less efficiently, Met from aminoacyl-tRNAs to the N-termini of proteins containing an N-terminal arginine or lysine. This chain is Leucyl/phenylalanyl-tRNA--protein transferase, found in Cereibacter sphaeroides (strain ATCC 17023 / DSM 158 / JCM 6121 / CCUG 31486 / LMG 2827 / NBRC 12203 / NCIMB 8253 / ATH 2.4.1.) (Rhodobacter sphaeroides).